Here is a 119-residue protein sequence, read N- to C-terminus: Protein FATTY ACID EXPORT 5 (119 aa).

A run of 3 helical transmembrane segments spans residues 27–47 (SIAS…AGFI), 57–77 (TSLL…FVMG), and 85–105 (KIMP…FYVY).

Belongs to the TMEM14 family.

It is found in the membrane. In terms of biological role, may be involved in free fatty acids export. The chain is Protein FATTY ACID EXPORT 5 from Arabidopsis thaliana (Mouse-ear cress).